Reading from the N-terminus, the 23-residue chain is Acidic phospholipase A2 CHA-E6b (23 aa).

The protein belongs to the phospholipase A2 family. Group II subfamily. D49 sub-subfamily. The cofactor is Ca(2+). Contains 7 disulfide bonds. As to expression, expressed by the venom gland.

Its subcellular location is the secreted. The catalysed reaction is a 1,2-diacyl-sn-glycero-3-phosphocholine + H2O = a 1-acyl-sn-glycero-3-phosphocholine + a fatty acid + H(+). Snake venom phospholipase A2 (PLA2) that shows high lipolytic (1200 umol/mg/min) and weak ADP-induced platelet aggregation activities. Also shows weak anticoagulant activity (IC(50) of about 1.0 uM). PLA2 catalyzes the calcium-dependent hydrolysis of the 2-acyl groups in 3-sn-phosphoglycerides. The polypeptide is Acidic phospholipase A2 CHA-E6b (Crotalus horridus (Timber rattlesnake)).